A 239-amino-acid chain; its full sequence is tRNA (guanine-N(7)-)-methyltransferase (239 aa).

S-adenosyl-L-methionine-binding residues include Glu-69, Glu-94, Asp-121, and Asp-144. Asp-144 is an active-site residue. Lys-148 serves as a coordination point for substrate. The interaction with RNA stretch occupies residues 150-155; the sequence is RHNKRR. Residues Asp-180 and 217 to 220 each bind substrate; that span reads TKFE.

The protein belongs to the class I-like SAM-binding methyltransferase superfamily. TrmB family. In terms of assembly, monomer.

The catalysed reaction is guanosine(46) in tRNA + S-adenosyl-L-methionine = N(7)-methylguanosine(46) in tRNA + S-adenosyl-L-homocysteine. It participates in tRNA modification; N(7)-methylguanine-tRNA biosynthesis. Its function is as follows. Catalyzes the formation of N(7)-methylguanine at position 46 (m7G46) in tRNA. The chain is tRNA (guanine-N(7)-)-methyltransferase from Escherichia coli O6:H1 (strain CFT073 / ATCC 700928 / UPEC).